Reading from the N-terminus, the 392-residue chain is Phospho-N-acetylmuramoyl-pentapeptide-transferase (392 aa).

10 consecutive transmembrane segments (helical) span residues 28–48 (RALM…PYVI), 74–94 (TPTM…LMWF), 100–120 (FVWI…VDDW), 137–157 (YFWQ…SISE), 193–213 (VSYP…IVGA), 225–245 (GLAI…AYVT), 262–282 (SGEL…FLWF), 289–309 (VFMG…IAVI), 314–334 (IVFF…MAQV), and 369–389 (QVVV…LSTL).

Belongs to the glycosyltransferase 4 family. MraY subfamily. Mg(2+) is required as a cofactor.

It is found in the cell inner membrane. The enzyme catalyses UDP-N-acetyl-alpha-D-muramoyl-L-alanyl-gamma-D-glutamyl-meso-2,6-diaminopimeloyl-D-alanyl-D-alanine + di-trans,octa-cis-undecaprenyl phosphate = di-trans,octa-cis-undecaprenyl diphospho-N-acetyl-alpha-D-muramoyl-L-alanyl-D-glutamyl-meso-2,6-diaminopimeloyl-D-alanyl-D-alanine + UMP. It functions in the pathway cell wall biogenesis; peptidoglycan biosynthesis. Functionally, catalyzes the initial step of the lipid cycle reactions in the biosynthesis of the cell wall peptidoglycan: transfers peptidoglycan precursor phospho-MurNAc-pentapeptide from UDP-MurNAc-pentapeptide onto the lipid carrier undecaprenyl phosphate, yielding undecaprenyl-pyrophosphoryl-MurNAc-pentapeptide, known as lipid I. This chain is Phospho-N-acetylmuramoyl-pentapeptide-transferase, found in Variovorax paradoxus (strain S110).